The primary structure comprises 145 residues: Photosystem I reaction center subunit VI-2, chloroplastic (145 aa).

Residues M1–A50 constitute a chloroplast transit peptide. Residues L102 to V118 form a helical membrane-spanning segment. The interval V126–L145 is disordered.

It belongs to the psaH family.

It is found in the plastid. The protein resides in the chloroplast thylakoid membrane. In terms of biological role, possible role could be the docking of the LHC I antenna complex to the core complex. The protein is Photosystem I reaction center subunit VI-2, chloroplastic (PSAH2) of Arabidopsis thaliana (Mouse-ear cress).